A 179-amino-acid polypeptide reads, in one-letter code: CASP-like protein 5A2 (179 aa).

Residues 1–54 (MEATSHPAVHPVAVPPQFQGAGPPAIQMKDFPGSPGTAGGLALRFTQFGFSLIS) are Cytoplasmic-facing. The next 2 membrane-spanning stretches (helical) occupy residues 55–75 (LCIMVSIAGFSSVTAFCFLVA) and 76–96 (TMVFQCIWSLCLGALDIYALL). Residues 97 to 114 (TQRSFRNPLIVSLFVVGD) lie on the Cytoplasmic side of the membrane. A helical membrane pass occupies residues 115–135 (WVTSTMTFAGACAAAGITVLI). Topologically, residues 136 to 154 (DNDLEQCGPNHCGRFEAAA) are extracellular. The helical transmembrane segment at 155-175 (AMAFMSWTATTLSFCLSFWLL) threads the bilayer. The Cytoplasmic segment spans residues 176–179 (ASCR).

Belongs to the Casparian strip membrane proteins (CASP) family. Homodimer and heterodimers.

It localises to the cell membrane. This chain is CASP-like protein 5A2, found in Physcomitrium patens (Spreading-leaved earth moss).